The primary structure comprises 297 residues: Tryptophan 2,3-dioxygenase (297 aa).

Residues 51 to 55 (FIIQH), Tyr113, and Arg117 each bind substrate. Residue His240 participates in heme binding. A substrate-binding site is contributed by Thr254.

This sequence belongs to the tryptophan 2,3-dioxygenase family. In terms of assembly, homotetramer. Requires heme as cofactor.

The catalysed reaction is L-tryptophan + O2 = N-formyl-L-kynurenine. It participates in amino-acid degradation; L-tryptophan degradation via kynurenine pathway; L-kynurenine from L-tryptophan: step 1/2. Heme-dependent dioxygenase that catalyzes the oxidative cleavage of the L-tryptophan (L-Trp) pyrrole ring and converts L-tryptophan to N-formyl-L-kynurenine. Catalyzes the oxidative cleavage of the indole moiety. The protein is Tryptophan 2,3-dioxygenase of Xanthomonas oryzae pv. oryzae (strain MAFF 311018).